Reading from the N-terminus, the 202-residue chain is Translation initiation factor IF-3 (202 aa).

Residues 178–202 (TPRKTPLLKKESETTEPKKALRSIN) form a disordered region. Positions 185-196 (LKKESETTEPKK) are enriched in basic and acidic residues.

This sequence belongs to the IF-3 family. In terms of assembly, monomer.

The protein resides in the cytoplasm. In terms of biological role, IF-3 binds to the 30S ribosomal subunit and shifts the equilibrium between 70S ribosomes and their 50S and 30S subunits in favor of the free subunits, thus enhancing the availability of 30S subunits on which protein synthesis initiation begins. The polypeptide is Translation initiation factor IF-3 (Prochlorococcus marinus (strain NATL1A)).